The sequence spans 941 residues: Heat shock protein 70 homolog (941 aa).

Residues 851–887 (ENQPDIPEDSEDSESEDDTTTSKDSESSEITENLALP) form a disordered region. Positions 856-869 (IPEDSEDSESEDDT) are enriched in acidic residues.

Belongs to the heat shock protein 70 family.

Its function is as follows. Probable chaperone. In Acanthamoeba polyphaga (Amoeba), this protein is Heat shock protein 70 homolog.